Here is a 159-residue protein sequence, read N- to C-terminus: Transcription elongation factor GreA (159 aa).

Positions asparagine 45 to leucine 67 form a coiled coil.

This sequence belongs to the GreA/GreB family.

Its function is as follows. Necessary for efficient RNA polymerase transcription elongation past template-encoded arresting sites. The arresting sites in DNA have the property of trapping a certain fraction of elongating RNA polymerases that pass through, resulting in locked ternary complexes. Cleavage of the nascent transcript by cleavage factors such as GreA or GreB allows the resumption of elongation from the new 3'terminus. GreA releases sequences of 2 to 3 nucleotides. This is Transcription elongation factor GreA from Neorickettsia sennetsu (strain ATCC VR-367 / Miyayama) (Ehrlichia sennetsu).